Reading from the N-terminus, the 298-residue chain is Glycine--tRNA ligase alpha subunit (298 aa).

The protein belongs to the class-II aminoacyl-tRNA synthetase family. Tetramer of two alpha and two beta subunits.

Its subcellular location is the cytoplasm. It carries out the reaction tRNA(Gly) + glycine + ATP = glycyl-tRNA(Gly) + AMP + diphosphate. The polypeptide is Glycine--tRNA ligase alpha subunit (Neisseria meningitidis serogroup C / serotype 2a (strain ATCC 700532 / DSM 15464 / FAM18)).